Consider the following 229-residue polypeptide: Large ribosomal RNA subunit accumulation protein YCED homolog 2, chloroplastic (229 aa).

The transit peptide at 1 to 42 directs the protein to the chloroplast; it reads MDVRCLISPNLLNSKIKVSGNTHHLPFSSLSKKHQASSPIQA.

This sequence belongs to the DUF177 domain family.

The protein localises to the plastid. The protein resides in the chloroplast. In terms of biological role, may play a role in synthesis, processing and/or stability of 23S rRNA. This is Large ribosomal RNA subunit accumulation protein YCED homolog 2, chloroplastic from Arabidopsis thaliana (Mouse-ear cress).